The following is a 417-amino-acid chain: uncharacterized protein (417 aa).

Transmembrane regions (helical) follow at residues 21–41 (ISSLGDWLHILAVLTLAAFQL), 50–70 (LLMMSFALPVIVLGPVSGLLA), 88–108 (LTVISCVYVSELWQLYVLLSV), 166–186 (SVFYINAGAFFLSAVILFFLP), 217–237 (MPLLLTGLLTACVVLFVLQIG), 255–275 (LAGWCMAVSGAGMLLTAAITG), 283–303 (LLYFSAGTLLLGLATGGAPFL), 308–328 (IAGITLFIFAFFIMGAAFGLV), 351–371 (AIQSATTLASILGMAGGGVLA), and 373–393 (WIGVSLAFLVCGCLLIMIGLI).

Belongs to the major facilitator superfamily. TCR/Tet family.

It localises to the cell membrane. This is an uncharacterized protein from Bacillus subtilis (strain 168).